Here is a 1238-residue protein sequence, read N- to C-terminus: Cullin-associated NEDD8-dissociated protein 1 (1238 aa).

HEAT repeat units lie at residues 41-78, 126-167, 171-208, 210-247, and 251-292; these read TYEN…RVKD, LVIK…KYGS, GDLE…PSPD, LFNS…SSGY, and KYLP…KCQK. The disordered stretch occupies residues 315 to 354; that stretch reads YSDDGEGEEDGDEEEEEMETSGDNDEEQEEEEEEEDLSDD. 9 HEAT repeats span residues 382–419, 432–469, 603–641, 646–683, 688–725, 853–890, 933–966, 967–1004, and 1008–1045; these read ELYQ…QLNK, QQVP…IIPG, EIQS…SSIN, SILP…VCPN, SLLT…NYSE, HENE…CSLQ, PFLQ…KLSM, IEPN…ENKE, and QYLA…NKPN.

This sequence belongs to the CAND family.

It is found in the nucleus. Functionally, key assembly factor of SCF (SKP1-CUL1-F-box protein) E3 ubiquitin ligase complexes that promotes the exchange of the substrate-recognition F-box subunit in SCF complexes, thereby playing a key role in the cellular repertoire of SCF complexes. Acts as a F-box protein exchange factor. In Dictyostelium discoideum (Social amoeba), this protein is Cullin-associated NEDD8-dissociated protein 1 (cand1).